The primary structure comprises 576 residues: Arginine--tRNA ligase (576 aa).

The 'HIGH' region signature appears at 126–136 (ANPTGPMHIGH).

Belongs to the class-I aminoacyl-tRNA synthetase family. In terms of assembly, monomer.

It localises to the cytoplasm. It catalyses the reaction tRNA(Arg) + L-arginine + ATP = L-arginyl-tRNA(Arg) + AMP + diphosphate. This is Arginine--tRNA ligase (argS) from Rickettsia prowazekii (strain Madrid E).